The primary structure comprises 40 residues: Putative NAD(P)-dependent glyceraldehyde-3-phosphate dehydrogenase PS5 (40 aa).

This is Putative NAD(P)-dependent glyceraldehyde-3-phosphate dehydrogenase PS5 from Pinus strobus (Eastern white pine).